We begin with the raw amino-acid sequence, 295 residues long: F-box only protein 8 (295 aa).

Positions 35–80 constitute an F-box domain; it reads TWVARYIPQDLLIEILTRLPPKSVMRFKCVSKFWSSLLSSRYFCNR.

This chain is F-box only protein 8 (FBX8), found in Arabidopsis thaliana (Mouse-ear cress).